The following is a 558-amino-acid chain: Formate--tetrahydrofolate ligase (558 aa).

67 to 74 (TPAGEGKT) provides a ligand contact to ATP.

This sequence belongs to the formate--tetrahydrofolate ligase family.

It carries out the reaction (6S)-5,6,7,8-tetrahydrofolate + formate + ATP = (6R)-10-formyltetrahydrofolate + ADP + phosphate. It participates in one-carbon metabolism; tetrahydrofolate interconversion. This is Formate--tetrahydrofolate ligase from Ruegeria sp. (strain TM1040) (Silicibacter sp.).